The following is a 199-amino-acid chain: Early nodulin-like protein 3 (199 aa).

The first 23 residues, 1–23 (MGLVMRFDLYLMFVMLMGLGFTI), serve as a signal peptide directing secretion. A Phytocyanin domain is found at 27–128 (YKFYVGGKDG…GQKLAVKVLS (102 aa)). N-linked (GlcNAc...) asparagine glycosylation is found at asparagine 57 and asparagine 83. A disulfide bond links cysteine 82 and cysteine 116. The tract at residues 130–180 (VHHSHSPRHTSPSPSPVHQELSSPGPSPGVEPSSDSNSRVPAPGPATAPNS) is disordered. Low complexity predominate over residues 138-165 (HTSPSPSPVHQELSSPGPSPGVEPSSDS). A lipid anchor (GPI-anchor amidated asparagine) is attached at asparagine 179. A propeptide spans 180 to 199 (SAGLVGPGMVVLVIMISSLF) (removed in mature form).

This sequence belongs to the early nodulin-like (ENODL) family. In terms of tissue distribution, confined to flowers.

The protein resides in the cell membrane. Functionally, may act as a carbohydrate transporter. The chain is Early nodulin-like protein 3 from Arabidopsis thaliana (Mouse-ear cress).